Reading from the N-terminus, the 205-residue chain is Holliday junction branch migration complex subunit RuvA (205 aa).

Positions M1 to L64 are domain I. The segment at S65–I143 is domain II. Residues G144–V153 are flexible linker. The segment at V153–R205 is domain III.

This sequence belongs to the RuvA family. As to quaternary structure, homotetramer. Forms an RuvA(8)-RuvB(12)-Holliday junction (HJ) complex. HJ DNA is sandwiched between 2 RuvA tetramers; dsDNA enters through RuvA and exits via RuvB. An RuvB hexamer assembles on each DNA strand where it exits the tetramer. Each RuvB hexamer is contacted by two RuvA subunits (via domain III) on 2 adjacent RuvB subunits; this complex drives branch migration. In the full resolvosome a probable DNA-RuvA(4)-RuvB(12)-RuvC(2) complex forms which resolves the HJ.

The protein localises to the cytoplasm. In terms of biological role, the RuvA-RuvB-RuvC complex processes Holliday junction (HJ) DNA during genetic recombination and DNA repair, while the RuvA-RuvB complex plays an important role in the rescue of blocked DNA replication forks via replication fork reversal (RFR). RuvA specifically binds to HJ cruciform DNA, conferring on it an open structure. The RuvB hexamer acts as an ATP-dependent pump, pulling dsDNA into and through the RuvAB complex. HJ branch migration allows RuvC to scan DNA until it finds its consensus sequence, where it cleaves and resolves the cruciform DNA. This chain is Holliday junction branch migration complex subunit RuvA, found in Sinorhizobium fredii (strain NBRC 101917 / NGR234).